The chain runs to 61 residues: Alpha-conotoxin-like PnMGMR-02 (61 aa).

Positions 1–21 (MGMRMMFTVFLLVVLATTVVS) are cleaved as a signal peptide. Residues 22-44 (FTSDRASDGGNAAASDLIALTIK) constitute a propeptide that is removed on maturation. 2 disulfide bridges follow: Cys46–Cys52 and Cys47–Cys60. The segment at 48–50 (SRP) is ser-Xaa-Pro motif, crucial for potent interaction with nAChR. Cys60 bears the Cysteine amide mark.

This sequence belongs to the conotoxin A superfamily. As to expression, expressed by the venom duct.

Its subcellular location is the secreted. Alpha-conotoxins act on postsynaptic membranes, they bind to the nicotinic acetylcholine receptors (nAChR) and thus inhibit them. This toxin blocks mammalian nAChRs (alpha-7 &gt; alpha-3/beta-2). The sequence is that of Alpha-conotoxin-like PnMGMR-02 from Conus pennaceus (Feathered cone).